Here is a 340-residue protein sequence, read N- to C-terminus: Short-chain dehydrogenase/reductase prx1 (340 aa).

NADP(+) contacts are provided by Ile60, Lys84, Asp104, Asn131, and Lys162. Ser184 (proton donor) is an active-site residue. Residues Tyr210 and Lys214 each contribute to the NADP(+) site. The Proton acceptor role is filled by Tyr210. The active-site Lowers pKa of active site Tyr is Lys214.

The protein belongs to the short-chain dehydrogenases/reductases (SDR) family.

Its pathway is sesquiterpene biosynthesis. Its function is as follows. Short-chain dehydrogenase/reductase; part of the gene cluster that mediates the biosynthesis of PR-toxin, a bicyclic sesquiterpene belonging to the eremophilane class and acting as a mycotoxin. The first step of the pathway is catalyzed by the aristolochene synthase which performs the cyclization of trans,trans-farnesyl diphosphate (FPP) to the bicyclic sesquiterpene aristolochene. Following the formation of aristolochene, the non-oxygenated aristolochene is converted to the trioxygenated intermediate eremofortin B, via 7-epi-neopetasone. This conversion appears to involve three enzymes, a hydroxysterol oxidase-like enzyme, the quinone-oxidase prx3 that forms the quinone-type-structure in the bicyclic nucleus of aristolochene with the C8-oxo group and the C-3 hydroxyl group, and the P450 monooxygenase ORF6 that introduces the epoxide at the double bond between carbons 1 and 2. No monoxy or dioxy-intermediates have been reported to be released to the broth, so these three early oxidative reactions may be coupled together. Eremofortin B is further oxidized by another P450 monooxygenase, that introduces a second epoxide between carbons 7 and 11 prior to acetylation to eremofortin A by the acetyltransferase ORF8. The second epoxidation may be performed by a second P450 monooxygenase. After the acetylation step, eremofortin A is converted to eremofortin C and then to PR-toxin. First the conversion of eremofortin A to eremofortin C proceeds by oxidation of the side chain of the molecule at C-12 and is catalyzed by the short-chain oxidoreductase prx1. The cytochrome P450 monooxygenase ORF6 is probably also involved in this step. The primary alcohol formed at C-12 is finally oxidized by the short-chain alcohol dehydrogenase prx4 that forms PR-toxin. This is Short-chain dehydrogenase/reductase prx1 from Penicillium roqueforti (strain FM164).